A 627-amino-acid chain; its full sequence is Pentatricopeptide repeat-containing protein At2g35030, mitochondrial (627 aa).

Residues 1–44 constitute a mitochondrion transit peptide; the sequence is MQSRALSRLRSYYKRSSVFPSSDNDRSVQLFNLVRSIYSSSSRP. PPR repeat units lie at residues 45-75, 76-110, 111-138, 139-173, 174-200, 201-235, 236-262, 263-293, 294-328, 330-360, 365-396, 398-432, 433-467, and 469-499; these read RVPQPEWLIGELCKVGKIAEARKLFDGLPER, DVVTWTHVITGYIKLGDMREARELFDRVDSRKNVV, TWTAMVSGYLRSKQLSIAEMLFQEMPER, NVVSWNTMIDGYAQSGRIDKALELFDEMPERNIVS, WNSMVKALVQRGRIDEAMNLFERMPRR, DVVSWTAMVDGLAKNGKVDEARRLFDCMPERNIIS, WNAMITGYAQNNRIDEADQLFQVMPER, DFASWNTMITGFIRNREMNKACGLFDRMPEK, NVISWTTMITGYVENKENEEALNVFSKMLRDGSVK, NVGTYVSILSACSDLAGLVEGQQIHQLISKS, NEIVTSALLNMYSKSGELIAARKMFDNGLVCQ, DLISWNSMIAVYAHHGHGKEAIEMYNQMRKHGFKP, SAVTYLNLLFACSHAGLVEKGMEFFKDLVRDESLP, and REEHYTCLVDLCGRAGRLKDVTNFINCDDAR. The interval 504-579 is type E motif; sequence FYGAILSACN…QPGCSWVKVG (76 aa). Positions 580-610 are type E(+) motif; the sequence is KQNHLFVVGDKSHPQFEALDSILSDLRNKMR.

This sequence belongs to the PPR family. PCMP-E subfamily.

The protein localises to the mitochondrion. This chain is Pentatricopeptide repeat-containing protein At2g35030, mitochondrial (PCMP-E15), found in Arabidopsis thaliana (Mouse-ear cress).